The sequence spans 37 residues: Potassium channel toxin alpha-KTx 15.1 (37 aa).

Position 1 is a pyrrolidone carboxylic acid (glutamine 1). Disulfide bonds link cysteine 8-cysteine 28, cysteine 13-cysteine 33, and cysteine 17-cysteine 35.

This sequence belongs to the short scorpion toxin superfamily. Potassium channel inhibitor family. Alpha-KTx 15 subfamily. As to expression, expressed by the venom gland.

The protein localises to the secreted. In terms of biological role, blocker of voltage-gated potassium channels (600 nM of the toxin induces a block of 25% of hERG currents). May also inhibit Kv4/KCND when coexpressed with DPP6 or DPP10. In adult rat brain, it blocks the transient potassium channels in cerebellum granular cells. Blocks potassium channels by a simple 'plugging mechanism', in which a single toxin molecule finds a specific receptor site in the external vestibule of the potassium channel and thereby occludes the outer entry to the potassium conducting pore. The chain is Potassium channel toxin alpha-KTx 15.1 from Androctonus australis (Sahara scorpion).